The following is a 106-amino-acid chain: Probable glutaredoxin (106 aa).

In terms of domain architecture, Glutaredoxin spans 8–106 (IVQKITGADP…AKYLDVQFTQ (99 aa)). Cysteines 28 and 31 form a disulfide.

It belongs to the glutaredoxin family.

Its subcellular location is the virion. This is Probable glutaredoxin from Acanthamoeba polyphaga mimivirus (APMV).